We begin with the raw amino-acid sequence, 469 residues long: Interstitial collagenase (469 aa).

A signal peptide spans 1–18; that stretch reads MLSLPLLLLLLWGMGSHS. Positions 19-99 are cleaved as a propeptide — activation peptide; that stretch reads FPTVPSETRE…PRCGVPDVAE (81 aa). The Cysteine switch motif lies at 90-97; it reads PRCGVPDV. Cys-92 provides a ligand contact to Zn(2+). Asp-124 and Asp-158 together coordinate Ca(2+). Zn(2+)-binding residues include His-168 and Asp-170. Ca(2+) contacts are provided by Asp-175, Gly-176, Gly-178, and Asn-180. His-183 is a binding site for Zn(2+). Residues Arg-190, Gly-192, and Asp-194 each coordinate Ca(2+). His-196 contributes to the Zn(2+) binding site. Asp-198, Glu-199, and Glu-201 together coordinate Ca(2+). His-218 contacts Zn(2+). The active site involves Glu-219. Residues His-222 and His-228 each contribute to the Zn(2+) site. At Thr-274 the chain carries Phosphothreonine. Hemopexin repeat units lie at residues 275 to 324, 325 to 371, 374 to 422, and 423 to 466; these read PEVC…WPQL, PNGL…FGFP, VKNI…FPGI, and GDKV…WFNC. A disulfide bridge links Cys-278 with Cys-466. Ca(2+)-binding residues include Asp-285 and Gln-329. Residue Tyr-360 is modified to Phosphotyrosine; by PKDCC. Residues Asp-378 and Asp-427 each coordinate Ca(2+).

Belongs to the peptidase M10A family. It depends on Ca(2+) as a cofactor. The cofactor is Zn(2+). Post-translationally, tyrosine phosphorylated in platelets by PKDCC/VLK.

The protein resides in the secreted. Its subcellular location is the extracellular space. It localises to the extracellular matrix. It carries out the reaction Cleavage of the triple helix of collagen at about three-quarters of the length of the molecule from the N-terminus, at 775-Gly-|-Ile-776 in the alpha1(I) chain. Cleaves synthetic substrates and alpha-macroglobulins at bonds where P1' is a hydrophobic residue.. Can be activated without removal of the activation peptide. In terms of biological role, cleaves collagens of types I, II, and III at one site in the helical domain. Also cleaves collagens of types VII and X. In Equus caballus (Horse), this protein is Interstitial collagenase (MMP1).